Here is a 116-residue protein sequence, read N- to C-terminus: Flagellar transcriptional regulator FlhD (116 aa).

The protein belongs to the FlhD family. In terms of assembly, homodimer; disulfide-linked. Forms a heterohexamer composed of two FlhC and four FlhD subunits. Each FlhC binds a FlhD dimer, forming a heterotrimer, and a hexamer assembles by dimerization of two heterotrimers.

It localises to the cytoplasm. Functions in complex with FlhC as a master transcriptional regulator that regulates transcription of several flagellar and non-flagellar operons by binding to their promoter region. Activates expression of class 2 flagellar genes, including fliA, which is a flagellum-specific sigma factor that turns on the class 3 genes. Also regulates genes whose products function in a variety of physiological pathways. The sequence is that of Flagellar transcriptional regulator FlhD from Escherichia coli O157:H7.